Here is a 149-residue protein sequence, read N- to C-terminus: Large ribosomal subunit protein bL9 (149 aa).

It belongs to the bacterial ribosomal protein bL9 family.

Binds to the 23S rRNA. The polypeptide is Large ribosomal subunit protein bL9 (Xylella fastidiosa (strain M23)).